The following is a 416-amino-acid chain: UDP-N-acetylmuramoylalanine--D-glutamate ligase (416 aa).

104–110 (GSNGKST) contacts ATP.

It belongs to the MurCDEF family.

The protein localises to the cytoplasm. The enzyme catalyses UDP-N-acetyl-alpha-D-muramoyl-L-alanine + D-glutamate + ATP = UDP-N-acetyl-alpha-D-muramoyl-L-alanyl-D-glutamate + ADP + phosphate + H(+). Its pathway is cell wall biogenesis; peptidoglycan biosynthesis. Functionally, cell wall formation. Catalyzes the addition of glutamate to the nucleotide precursor UDP-N-acetylmuramoyl-L-alanine (UMA). This is UDP-N-acetylmuramoylalanine--D-glutamate ligase from Francisella tularensis subsp. tularensis (strain FSC 198).